Here is a 415-residue protein sequence, read N- to C-terminus: Serine hydroxymethyltransferase (415 aa).

(6S)-5,6,7,8-tetrahydrofolate is bound by residues Leu-117 and 121–123 (GHL). An N6-(pyridoxal phosphate)lysine modification is found at Lys-226. Glu-241 is a binding site for (6S)-5,6,7,8-tetrahydrofolate.

Belongs to the SHMT family. In terms of assembly, homodimer. Pyridoxal 5'-phosphate is required as a cofactor.

The protein resides in the cytoplasm. It catalyses the reaction (6R)-5,10-methylene-5,6,7,8-tetrahydrofolate + glycine + H2O = (6S)-5,6,7,8-tetrahydrofolate + L-serine. It functions in the pathway one-carbon metabolism; tetrahydrofolate interconversion. The protein operates within amino-acid biosynthesis; glycine biosynthesis; glycine from L-serine: step 1/1. Functionally, catalyzes the reversible interconversion of serine and glycine with tetrahydrofolate (THF) serving as the one-carbon carrier. This reaction serves as the major source of one-carbon groups required for the biosynthesis of purines, thymidylate, methionine, and other important biomolecules. Also exhibits THF-independent aldolase activity toward beta-hydroxyamino acids, producing glycine and aldehydes, via a retro-aldol mechanism. The polypeptide is Serine hydroxymethyltransferase (Bacillus licheniformis (strain ATCC 14580 / DSM 13 / JCM 2505 / CCUG 7422 / NBRC 12200 / NCIMB 9375 / NCTC 10341 / NRRL NRS-1264 / Gibson 46)).